Consider the following 744-residue polypeptide: CCR4-NOT transcription complex subunit 10 (744 aa).

A compositionally biased stretch (basic and acidic residues) spans M1 to G16. Residues M1 to D25 are disordered. A2 is modified (N-acetylalanine). Residues K74–V107 are a coiled coil. The span at N183–D199 shows a compositional bias: low complexity. Disordered regions lie at residues N183–K204, Q477–S521, and V602–Y634. The segment covering G484–T495 has biased composition (polar residues). A compositionally biased stretch (low complexity) spans E496–S506. A compositionally biased stretch (polar residues) spans V602–D612.

It belongs to the CNOT10 family. In terms of assembly, component of the CCR4-NOT complex; distinct complexes seem to exist that differ in the participation of probably mutually exclusive catalytic subunits. CNOT10 and CNOT11 form a subcomplex docked to the CNOT1 scaffold.

The protein resides in the cytoplasm. It localises to the nucleus. Functionally, component of the CCR4-NOT complex which is one of the major cellular mRNA deadenylases and is linked to various cellular processes including bulk mRNA degradation, miRNA-mediated repression, translational repression during translational initiation and general transcription regulation. Additional complex functions may be a consequence of its influence on mRNA expression. Is not required for association of CNOT7 to the CCR4-NOT complex. In Homo sapiens (Human), this protein is CCR4-NOT transcription complex subunit 10 (CNOT10).